A 315-amino-acid polypeptide reads, in one-letter code: Mycothiol acetyltransferase (315 aa).

N-acetyltransferase domains lie at 4-141 (LDWR…RPLR) and 152-315 (VVIR…GTDN). Glu36 is a 1D-myo-inositol 2-(L-cysteinylamino)-2-deoxy-alpha-D-glucopyranoside binding site. Acetyl-CoA-binding positions include 80–82 (LVV) and 88–93 (RRGIGT). 3 residues coordinate 1D-myo-inositol 2-(L-cysteinylamino)-2-deoxy-alpha-D-glucopyranoside: Glu179, Lys224, and Glu234. Acetyl-CoA is bound by residues 238-240 (LGV) and 245-251 (QRRGLGQ). Tyr282 is a 1D-myo-inositol 2-(L-cysteinylamino)-2-deoxy-alpha-D-glucopyranoside binding site. Residue 287–292 (NVAAVR) participates in acetyl-CoA binding.

This sequence belongs to the acetyltransferase family. MshD subfamily. As to quaternary structure, monomer.

The enzyme catalyses 1D-myo-inositol 2-(L-cysteinylamino)-2-deoxy-alpha-D-glucopyranoside + acetyl-CoA = mycothiol + CoA + H(+). Catalyzes the transfer of acetyl from acetyl-CoA to desacetylmycothiol (Cys-GlcN-Ins) to form mycothiol. The polypeptide is Mycothiol acetyltransferase (Mycobacterium bovis (strain ATCC BAA-935 / AF2122/97)).